The sequence spans 142 residues: Bacilliredoxin ABC2448 (142 aa).

It belongs to the bacilliredoxin family.

The polypeptide is Bacilliredoxin ABC2448 (Shouchella clausii (strain KSM-K16) (Alkalihalobacillus clausii)).